The sequence spans 211 residues: Peptidyl-prolyl cis-trans isomerase-like 3 (211 aa).

Positions 1–204 (MSVTLHTTHG…ETLRINRVTI (204 aa)) constitute a PPIase cyclophilin-type domain.

It belongs to the cyclophilin-type PPIase family. PPIL3 subfamily.

The enzyme catalyses [protein]-peptidylproline (omega=180) = [protein]-peptidylproline (omega=0). PPIases accelerate the folding of proteins. It catalyzes the cis-trans isomerization of proline imidic peptide bonds in oligopeptides. This chain is Peptidyl-prolyl cis-trans isomerase-like 3 (cyp10), found in Emericella nidulans (strain FGSC A4 / ATCC 38163 / CBS 112.46 / NRRL 194 / M139) (Aspergillus nidulans).